The chain runs to 345 residues: Tryptophan--tRNA ligase (345 aa).

ATP contacts are provided by residues 21 to 23 and 30 to 31; these read QPT and GN. The short motif at 22–31 is the 'HIGH' region element; sequence PTADSYHLGN. D147 contributes to the L-tryptophan binding site. ATP contacts are provided by residues 159–161, I198, and 207–211; these read GED and KMSKS. The 'KMSKS' region signature appears at 207-211; that stretch reads KMSKS.

This sequence belongs to the class-I aminoacyl-tRNA synthetase family. In terms of assembly, homodimer.

It localises to the cytoplasm. It catalyses the reaction tRNA(Trp) + L-tryptophan + ATP = L-tryptophyl-tRNA(Trp) + AMP + diphosphate + H(+). Catalyzes the attachment of tryptophan to tRNA(Trp). This Corynebacterium glutamicum (strain ATCC 13032 / DSM 20300 / JCM 1318 / BCRC 11384 / CCUG 27702 / LMG 3730 / NBRC 12168 / NCIMB 10025 / NRRL B-2784 / 534) protein is Tryptophan--tRNA ligase.